A 151-amino-acid chain; its full sequence is Large ribosomal subunit protein bL17 (151 aa).

The segment at 118 to 151 (EAKQPPRKEKAKKPAPVQAEEASATPASEEKAQD) is disordered. Residues 131–144 (PAPVQAEEASATPA) are compositionally biased toward low complexity.

Belongs to the bacterial ribosomal protein bL17 family. Part of the 50S ribosomal subunit. Contacts protein L32.

The polypeptide is Large ribosomal subunit protein bL17 (Syntrophobacter fumaroxidans (strain DSM 10017 / MPOB)).